Here is a 202-residue protein sequence, read N- to C-terminus: Small ribosomal subunit protein uS4c (202 aa).

The S4 RNA-binding domain occupies 90 to 153 (MRLDNVIFRL…KSEAIISKNI (64 aa)).

Belongs to the universal ribosomal protein uS4 family. Part of the 30S ribosomal subunit. Contacts protein S5. The interaction surface between S4 and S5 is involved in control of translational fidelity.

The protein resides in the plastid. Its subcellular location is the chloroplast. Functionally, one of the primary rRNA binding proteins, it binds directly to 16S rRNA where it nucleates assembly of the body of the 30S subunit. With S5 and S12 plays an important role in translational accuracy. The protein is Small ribosomal subunit protein uS4c (rps4) of Hypopterygium didictyon.